The chain runs to 324 residues: Beta-ketoacyl-[acyl-carrier-protein] synthase III (324 aa).

Residues cysteine 113 and histidine 251 contribute to the active site. Residues glutamine 252 to arginine 256 form an ACP-binding region. Residue asparagine 281 is part of the active site.

Belongs to the thiolase-like superfamily. FabH family. In terms of assembly, homodimer.

The protein localises to the cytoplasm. The enzyme catalyses malonyl-[ACP] + acetyl-CoA + H(+) = 3-oxobutanoyl-[ACP] + CO2 + CoA. It participates in lipid metabolism; fatty acid biosynthesis. In terms of biological role, catalyzes the condensation reaction of fatty acid synthesis by the addition to an acyl acceptor of two carbons from malonyl-ACP. Catalyzes the first condensation reaction which initiates fatty acid synthesis and may therefore play a role in governing the total rate of fatty acid production. Possesses both acetoacetyl-ACP synthase and acetyl transacylase activities. Its substrate specificity determines the biosynthesis of branched-chain and/or straight-chain of fatty acids. In Bartonella tribocorum (strain CIP 105476 / IBS 506), this protein is Beta-ketoacyl-[acyl-carrier-protein] synthase III.